We begin with the raw amino-acid sequence, 130 residues long: Transcription antitermination protein NusB (130 aa).

It belongs to the NusB family.

Its function is as follows. Involved in transcription antitermination. Required for transcription of ribosomal RNA (rRNA) genes. Binds specifically to the boxA antiterminator sequence of the ribosomal RNA (rrn) operons. This chain is Transcription antitermination protein NusB, found in Bacillus anthracis (strain A0248).